The chain runs to 269 residues: Phosphate import ATP-binding protein PstB 1 (269 aa).

An ABC transporter domain is found at 16–255; it reads FTTQNLDIYY…DRTGKVFGDP (240 aa). An ATP-binding site is contributed by 48–55; sequence GPSGCGKS.

Belongs to the ABC transporter superfamily. Phosphate importer (TC 3.A.1.7) family. The complex is composed of two ATP-binding proteins (PstB), two transmembrane proteins (PstC and PstA) and a solute-binding protein (PstS).

The protein resides in the cell inner membrane. It catalyses the reaction phosphate(out) + ATP + H2O = ADP + 2 phosphate(in) + H(+). Its function is as follows. Part of the ABC transporter complex PstSACB involved in phosphate import. Responsible for energy coupling to the transport system. The sequence is that of Phosphate import ATP-binding protein PstB 1 from Synechocystis sp. (strain ATCC 27184 / PCC 6803 / Kazusa).